We begin with the raw amino-acid sequence, 647 residues long: Threonine--tRNA ligase (647 aa).

In terms of domain architecture, TGS spans Met1–Thr61. Positions Asp240–Pro538 are catalytic. Zn(2+) is bound by residues Cys334, His385, and His515.

Belongs to the class-II aminoacyl-tRNA synthetase family. In terms of assembly, homodimer. Zn(2+) serves as cofactor.

Its subcellular location is the cytoplasm. The enzyme catalyses tRNA(Thr) + L-threonine + ATP = L-threonyl-tRNA(Thr) + AMP + diphosphate + H(+). Functionally, catalyzes the attachment of threonine to tRNA(Thr) in a two-step reaction: L-threonine is first activated by ATP to form Thr-AMP and then transferred to the acceptor end of tRNA(Thr). Also edits incorrectly charged L-seryl-tRNA(Thr). This is Threonine--tRNA ligase from Streptococcus pyogenes serotype M4 (strain MGAS10750).